A 214-amino-acid polypeptide reads, in one-letter code: A-type ATP synthase subunit D (214 aa).

The protein belongs to the V-ATPase D subunit family. In terms of assembly, has multiple subunits with at least A(3), B(3), C, D, E, F, H, I and proteolipid K(x).

It localises to the cell membrane. In terms of biological role, component of the A-type ATP synthase that produces ATP from ADP in the presence of a proton gradient across the membrane. The protein is A-type ATP synthase subunit D of Thermococcus kodakarensis (strain ATCC BAA-918 / JCM 12380 / KOD1) (Pyrococcus kodakaraensis (strain KOD1)).